The sequence spans 193 residues: Peptidyl-tRNA hydrolase (193 aa).

Residue Tyr-16 participates in tRNA binding. His-21 acts as the Proton acceptor in catalysis. Residues Phe-67, Asn-69, and Asn-115 each contribute to the tRNA site.

This sequence belongs to the PTH family. In terms of assembly, monomer.

It localises to the cytoplasm. The catalysed reaction is an N-acyl-L-alpha-aminoacyl-tRNA + H2O = an N-acyl-L-amino acid + a tRNA + H(+). In terms of biological role, hydrolyzes ribosome-free peptidyl-tRNAs (with 1 or more amino acids incorporated), which drop off the ribosome during protein synthesis, or as a result of ribosome stalling. Its function is as follows. Catalyzes the release of premature peptidyl moieties from peptidyl-tRNA molecules trapped in stalled 50S ribosomal subunits, and thus maintains levels of free tRNAs and 50S ribosomes. This Psychrobacter arcticus (strain DSM 17307 / VKM B-2377 / 273-4) protein is Peptidyl-tRNA hydrolase.